The primary structure comprises 95 residues: Co-chaperonin GroES (95 aa).

The protein belongs to the GroES chaperonin family. In terms of assembly, heptamer of 7 subunits arranged in a ring. Interacts with the chaperonin GroEL.

The protein resides in the cytoplasm. In terms of biological role, together with the chaperonin GroEL, plays an essential role in assisting protein folding. The GroEL-GroES system forms a nano-cage that allows encapsulation of the non-native substrate proteins and provides a physical environment optimized to promote and accelerate protein folding. GroES binds to the apical surface of the GroEL ring, thereby capping the opening of the GroEL channel. This chain is Co-chaperonin GroES, found in Ruegeria pomeroyi (strain ATCC 700808 / DSM 15171 / DSS-3) (Silicibacter pomeroyi).